Here is a 173-residue protein sequence, read N- to C-terminus: Thiol-disulfide oxidoreductase ResA (173 aa).

A helical; Signal-anchor for type II membrane protein transmembrane segment spans residues 10 to 29; sequence VIILLILCGAVGFTLYQGYF. The Thioredoxin domain maps to 35–173; that stretch reads MEIGKEAPNF…LEEYLKKITP (139 aa). Cysteine 73 and cysteine 76 are joined by a disulfide.

This sequence belongs to the thioredoxin family. ResA subfamily.

It localises to the cell membrane. It participates in protein modification; cytochrome c assembly. Thiol-disulfide oxidoreductase which is required in disulfide reduction during c-type cytochrome synthesis. May accept reducing equivalents from CcdA, leading to breakage of disulfide bonds in apocytochrome c; following this reduction heme can be covalently attached. The chain is Thiol-disulfide oxidoreductase ResA from Bacillus thuringiensis subsp. konkukian (strain 97-27).